Consider the following 206-residue polypeptide: Large ribosomal subunit protein mL40 (206 aa).

The N-terminal 46 residues, 1-46 (MATAAMLCAARALRPRSWIPGTCQAQVRHTHQRASLLSFWELIPMR), are a transit peptide targeting the mitochondrion. Positions 170-190 (PFEKEGPHYTPPVPNYQAPEG) are disordered.

This sequence belongs to the mitochondrion-specific ribosomal protein mL40 family. Component of the mitochondrial ribosome large subunit (39S) which comprises a 16S rRNA and about 50 distinct proteins.

It is found in the mitochondrion. The chain is Large ribosomal subunit protein mL40 (Mrpl40) from Rattus norvegicus (Rat).